Here is a 556-residue protein sequence, read N- to C-terminus: 2-succinyl-5-enolpyruvyl-6-hydroxy-3-cyclohexene-1-carboxylate synthase (556 aa).

Belongs to the TPP enzyme family. MenD subfamily. As to quaternary structure, homodimer. Mg(2+) is required as a cofactor. Mn(2+) serves as cofactor. It depends on thiamine diphosphate as a cofactor.

It carries out the reaction isochorismate + 2-oxoglutarate + H(+) = 5-enolpyruvoyl-6-hydroxy-2-succinyl-cyclohex-3-ene-1-carboxylate + CO2. Its pathway is quinol/quinone metabolism; 1,4-dihydroxy-2-naphthoate biosynthesis; 1,4-dihydroxy-2-naphthoate from chorismate: step 2/7. It functions in the pathway quinol/quinone metabolism; menaquinone biosynthesis. Functionally, catalyzes the thiamine diphosphate-dependent decarboxylation of 2-oxoglutarate and the subsequent addition of the resulting succinic semialdehyde-thiamine pyrophosphate anion to isochorismate to yield 2-succinyl-5-enolpyruvyl-6-hydroxy-3-cyclohexene-1-carboxylate (SEPHCHC). The sequence is that of 2-succinyl-5-enolpyruvyl-6-hydroxy-3-cyclohexene-1-carboxylate synthase from Salmonella typhi.